The following is a 422-amino-acid chain: UDP-N-acetylglucosamine 1-carboxyvinyltransferase (422 aa).

Lysine 22 to asparagine 23 lines the phosphoenolpyruvate pocket. Residue arginine 93 participates in UDP-N-acetyl-alpha-D-glucosamine binding. The active-site Proton donor is the cysteine 117. Cysteine 117 is subject to 2-(S-cysteinyl)pyruvic acid O-phosphothioketal. UDP-N-acetyl-alpha-D-glucosamine is bound by residues arginine 122–leucine 126, aspartate 308, and leucine 330.

Belongs to the EPSP synthase family. MurA subfamily.

Its subcellular location is the cytoplasm. The catalysed reaction is phosphoenolpyruvate + UDP-N-acetyl-alpha-D-glucosamine = UDP-N-acetyl-3-O-(1-carboxyvinyl)-alpha-D-glucosamine + phosphate. Its pathway is cell wall biogenesis; peptidoglycan biosynthesis. Its function is as follows. Cell wall formation. Adds enolpyruvyl to UDP-N-acetylglucosamine. This chain is UDP-N-acetylglucosamine 1-carboxyvinyltransferase, found in Helicobacter pylori (strain ATCC 700392 / 26695) (Campylobacter pylori).